Reading from the N-terminus, the 271-residue chain is Tryptophan synthase alpha chain (271 aa).

Residues E56 and D67 each act as proton acceptor in the active site.

Belongs to the TrpA family. As to quaternary structure, tetramer of two alpha and two beta chains.

The enzyme catalyses (1S,2R)-1-C-(indol-3-yl)glycerol 3-phosphate + L-serine = D-glyceraldehyde 3-phosphate + L-tryptophan + H2O. The protein operates within amino-acid biosynthesis; L-tryptophan biosynthesis; L-tryptophan from chorismate: step 5/5. In terms of biological role, the alpha subunit is responsible for the aldol cleavage of indoleglycerol phosphate to indole and glyceraldehyde 3-phosphate. In Mycolicibacterium paratuberculosis (strain ATCC BAA-968 / K-10) (Mycobacterium paratuberculosis), this protein is Tryptophan synthase alpha chain.